The chain runs to 612 residues: Lysophospholipase (612 aa).

An N-terminal signal peptide occupies residues 1-9 (DITFAGVQR). Residues 24 to 571 (SCPASRPTVR…DRYCWNGTVN (548 aa)) form the PLA2c domain. Residues Asn-41, Asn-81, Asn-116, Asn-150, Asn-223, Asn-267, Asn-306, Asn-335, Asn-427, Asn-440, Asn-446, Asn-477, Asn-498, Asn-526, Asn-532, Asn-567, and Asn-571 are each glycosylated (N-linked (GlcNAc...) asparagine).

Belongs to the lysophospholipase family. In terms of processing, N-glycosylated.

The protein localises to the secreted. It catalyses the reaction a 1-acyl-sn-glycero-3-phosphocholine + H2O = sn-glycerol 3-phosphocholine + a fatty acid + H(+). In terms of biological role, catalyzes the release of fatty acids from lysophospholipids. This Penicillium chrysogenum (Penicillium notatum) protein is Lysophospholipase.